Here is a 216-residue protein sequence, read N- to C-terminus: Pyridoxine/pyridoxamine 5'-phosphate oxidase (216 aa).

FMN-binding positions include 64–69 (RVVLLK), 79–80 (FT), Lys-85, Lys-86, and Gln-108. Lys-69 serves as a coordination point for substrate. Positions 126, 130, and 134 each coordinate substrate. Residues 143-144 (QS) and Trp-188 contribute to the FMN site. Residue 194–196 (RKH) participates in substrate binding. Residue Arg-198 coordinates FMN.

The protein belongs to the pyridoxamine 5'-phosphate oxidase family. As to quaternary structure, homodimer. It depends on FMN as a cofactor.

It catalyses the reaction pyridoxamine 5'-phosphate + O2 + H2O = pyridoxal 5'-phosphate + H2O2 + NH4(+). The catalysed reaction is pyridoxine 5'-phosphate + O2 = pyridoxal 5'-phosphate + H2O2. It functions in the pathway cofactor metabolism; pyridoxal 5'-phosphate salvage; pyridoxal 5'-phosphate from pyridoxamine 5'-phosphate: step 1/1. The protein operates within cofactor metabolism; pyridoxal 5'-phosphate salvage; pyridoxal 5'-phosphate from pyridoxine 5'-phosphate: step 1/1. Functionally, catalyzes the oxidation of either pyridoxine 5'-phosphate (PNP) or pyridoxamine 5'-phosphate (PMP) into pyridoxal 5'-phosphate (PLP). This is Pyridoxine/pyridoxamine 5'-phosphate oxidase from Wolbachia pipientis wMel.